Here is a 1192-residue protein sequence, read N- to C-terminus: Protein WWC2 (1192 aa).

2 WW domains span residues 10–43 (LPLP…DPRD) and 57–90 (DELP…DPRK). Coiled-coil stretches lie at residues 121–194 (KEQR…YKEQ) and 224–256 (ELKS…FHLD). Serine 286 carries the post-translational modification Phosphoserine. A coiled-coil region spans residues 302–421 (LAEKVRLSLQ…KLEETTKLTT (120 aa)). Residues 441 to 462 (SSLGSLASSRGSLNTSSRGSLN) form a disordered region. In terms of domain architecture, C2 spans 698–821 (ETAQVQIGLR…FSSEVFTLWY (124 aa)). Positions 859-887 (ALLARTSAELLAVEQELAQEEEEESGQEE) form a coiled coil. Disordered stretches follow at residues 873–895 (QELA…DGDW) and 911–991 (EAEV…SRQH). Residues 875 to 885 (LAQEEEEESGQ) show a composition bias toward acidic residues. Residues 923–933 (TEDLSSCTSVP) are compositionally biased toward polar residues. Over residues 938 to 951 (DGNRKESNCAKDLR) the composition is skewed to basic and acidic residues. Residue threonine 1004 is modified to Phosphothreonine. Residue serine 1022 is modified to Phosphoserine. The interaction with PRKCZ stretch occupies residues 1031-1050 (SLFVRNSTERRSLRVKRTVC). Positions 1068 to 1144 (DLELDLQASL…EQKQGLNAEK (77 aa)) form a coiled coil. The span at 1124 to 1137 (QAEKQAEQSKEEQK) shows a compositional bias: basic and acidic residues. The disordered stretch occupies residues 1124–1143 (QAEKQAEQSKEEQKQGLNAE).

Belongs to the WWC family. In terms of assembly, forms homodimers and heterodimers with WWC1 and WWC3. Interacts with DLC1 and PRKCZ. Interacts (via WW domains) with LATS1 and LATS2.

It is found in the cytoplasm. Its subcellular location is the cytosol. In terms of biological role, regulator of the Hippo signaling pathway, also known as the Salvador-Warts-Hippo (SWH) pathway. Enhances phosphorylation of LATS1 and YAP1 and negatively regulates cell proliferation and organ growth due to a suppression of the transcriptional activity of YAP1, the major effector of the Hippo pathway. In Homo sapiens (Human), this protein is Protein WWC2.